A 325-amino-acid polypeptide reads, in one-letter code: Probable flavonol synthase 5 (325 aa).

The segment at 1–21 (MEEERDHNASESSLPSLSKQL) is disordered. Positions 10–21 (SESSLPSLSKQL) are enriched in polar residues. In terms of domain architecture, Fe2OG dioxygenase spans 180–280 (TAEYVLRVNF…RISWPVFVAP (101 aa)). A 2-oxoglutarate-binding site is contributed by 188-190 (NFY). Fe cation-binding residues include histidine 205, aspartate 207, and histidine 261. 271–273 (RIS) provides a ligand contact to 2-oxoglutarate.

This sequence belongs to the iron/ascorbate-dependent oxidoreductase family. Fe(2+) is required as a cofactor. As to expression, expressed in young seedlings.

It carries out the reaction a (2R,3R)-dihydroflavonol + 2-oxoglutarate + O2 = a flavonol + succinate + CO2 + H2O. It functions in the pathway secondary metabolite biosynthesis; flavonoid biosynthesis. The chain is Probable flavonol synthase 5 (FLS5) from Arabidopsis thaliana (Mouse-ear cress).